A 244-amino-acid chain; its full sequence is Small ribosomal subunit protein uS2 (244 aa).

The protein belongs to the universal ribosomal protein uS2 family.

This Exiguobacterium sibiricum (strain DSM 17290 / CCUG 55495 / CIP 109462 / JCM 13490 / 255-15) protein is Small ribosomal subunit protein uS2.